Here is a 2829-residue protein sequence, read N- to C-terminus: Adenomatous polyposis coli homolog (2829 aa).

Positions A4–E58 form a coiled coil. 2 disordered regions span residues S80–P114 and A240–Y300. The stretch at Y133 to E244 forms a coiled coil. The span at A242 to P262 shows a compositional bias: basic and acidic residues. Polar residues predominate over residues T291–Y300. ARM repeat units follow at residues Q343 to S384, E462 to G504, A516 to W555, V559 to A599, E603 to S646, E652 to A691, and A694 to A733. The segment covering T833–R842 has biased composition (polar residues). Disordered regions lie at residues T833–I877, Q901–E941, S963–E988, S1032–N1260, R1278–Y1382, I1424–G1469, L1533–S1612, T1657–A1718, S1754–H1842, K1875–N1950, N1963–E2012, S2041–L2069, E2154–E2627, and K2686–V2829. A compositionally biased stretch (basic and acidic residues) spans S848–T857. 2 stretches are compositionally biased toward polar residues: residues Y863–I877 and R923–E941. Residues E1034 to E1047 are compositionally biased toward polar residues. The span at R1048–Q1067 shows a compositional bias: basic and acidic residues. Composition is skewed to polar residues over residues P1068–T1079 and R1106–V1117. A compositionally biased stretch (acidic residues) spans S1150 to T1159. Over residues A1171–S1188 the composition is skewed to basic and acidic residues. The segment covering D1190–K1208 has biased composition (polar residues). Residues S1217–N1230 are compositionally biased toward low complexity. Composition is skewed to polar residues over residues R1231–P1244, G1301–I1310, and N1340–D1351. Over residues S1361–A1372 the composition is skewed to low complexity. 2 stretches are compositionally biased toward basic and acidic residues: residues A1454–G1469 and Q1537–L1566. A coiled-coil region spans residues K1545 to E1578. The span at D1567 to E1577 shows a compositional bias: acidic residues. Residues Q1597 to A1608 show a composition bias toward pro residues. Positions P1671–T1683 are enriched in polar residues. A compositionally biased stretch (basic and acidic residues) spans D1684–A1703. Polar residues predominate over residues S1754–M1765. Composition is skewed to basic and acidic residues over residues F1786–E1795 and K1875–R1898. 2 stretches are compositionally biased toward polar residues: residues K1926–K1935 and L1984–G2003. Positions K2168 to G2186 are enriched in basic and acidic residues. The segment covering T2199–S2222 has biased composition (polar residues). Composition is skewed to low complexity over residues P2256–P2275, G2283–P2322, and T2346–S2359. 2 stretches are compositionally biased toward polar residues: residues G2360–N2408 and R2415–S2424. A compositionally biased stretch (low complexity) spans S2456–S2474. Residues S2549–G2562 are compositionally biased toward polar residues. Residues S2563 to E2573 show a composition bias toward low complexity. Residues S2574–Q2585 are compositionally biased toward basic and acidic residues. Residues T2616–E2627 are compositionally biased toward polar residues. Residues K2686–T2695 show a composition bias toward basic and acidic residues. The span at L2730 to A2743 shows a compositional bias: polar residues. The segment covering S2749 to S2760 has biased composition (low complexity). A compositionally biased stretch (polar residues) spans F2770–S2798.

The protein belongs to the adenomatous polyposis coli (APC) family.

Its function is as follows. Promotes rapid degradation of CTNNB1 and participates in Wnt signaling as a negative regulator. The polypeptide is Adenomatous polyposis coli homolog (apc) (Xenopus laevis (African clawed frog)).